Here is a 335-residue protein sequence, read N- to C-terminus: Tetraacyldisaccharide 4'-kinase (335 aa).

ATP is bound at residue 58–65 (TVGGSGKT).

This sequence belongs to the LpxK family.

The catalysed reaction is a lipid A disaccharide + ATP = a lipid IVA + ADP + H(+). The protein operates within glycolipid biosynthesis; lipid IV(A) biosynthesis; lipid IV(A) from (3R)-3-hydroxytetradecanoyl-[acyl-carrier-protein] and UDP-N-acetyl-alpha-D-glucosamine: step 6/6. Functionally, transfers the gamma-phosphate of ATP to the 4'-position of a tetraacyldisaccharide 1-phosphate intermediate (termed DS-1-P) to form tetraacyldisaccharide 1,4'-bis-phosphate (lipid IVA). In Shewanella oneidensis (strain ATCC 700550 / JCM 31522 / CIP 106686 / LMG 19005 / NCIMB 14063 / MR-1), this protein is Tetraacyldisaccharide 4'-kinase.